A 699-amino-acid polypeptide reads, in one-letter code: Glycine--tRNA ligase beta subunit (699 aa).

The protein belongs to the class-II aminoacyl-tRNA synthetase family. Tetramer of two alpha and two beta subunits.

It is found in the cytoplasm. It carries out the reaction tRNA(Gly) + glycine + ATP = glycyl-tRNA(Gly) + AMP + diphosphate. This chain is Glycine--tRNA ligase beta subunit, found in Methylobacterium radiotolerans (strain ATCC 27329 / DSM 1819 / JCM 2831 / NBRC 15690 / NCIMB 10815 / 0-1).